Reading from the N-terminus, the 514-residue chain is Cytochrome bd-II ubiquinol oxidase subunit 1 (514 aa).

Residues 1 to 22 lie on the Cytoplasmic side of the membrane; the sequence is MWDVIDLSRWQFALTALYHFLF. His-19 contributes to the heme binding site. The helical transmembrane segment at 23–42 threads the bilayer; it reads VPLTLGLIFLLAIMETIYVV. The Periplasmic segment spans residues 43–94; that stretch reads TGKTIYRDMTRFWGKLFGINFALGVATGLTMEFQFGTNWSFYSNYVGDIFGA. A helical transmembrane segment spans residues 95–114; that stretch reads PLAMEALMAFFLESTFVGLF. Residues 115–129 lie on the Cytoplasmic side of the membrane; that stretch reads FFGWQRLNKYQHLLV. The helical transmembrane segment at 130-149 threads the bilayer; the sequence is TWLVAFGSNLSALWILNANG. Residues 150–187 lie on the Periplasmic side of the membrane; it reads WMQYPTGAHFDIDTLRMEMTSFSELVFNPVSQVKFVHT. Residue His-186 participates in heme binding. A helical transmembrane segment spans residues 188–207; the sequence is VMAGYVTGAMFIMAISAWYL. The Cytoplasmic segment spans residues 208-219; that stretch reads LRGRERNVALRS. The chain crosses the membrane as a helical span at residues 220 to 239; sequence FAIGSVFGTLAIIGTLQLGD. The Periplasmic portion of the chain corresponds to 240-392; the sequence is SSAYEVAQVQ…VAPVFWSFRI (153 aa). Heme is bound at residue Met-393. Residues 393–412 form a helical membrane-spanning segment; that stretch reads MVGCGSLLLLVMLIALVQTL. The Cytoplasmic segment spans residues 413 to 470; that stretch reads RGKIDQHRWVLKMALWSLPLPWIAIEAGWFMTEFGRQPWAIQDILPTYSAHSALTTGQ. The chain crosses the membrane as a helical span at residues 471–490; the sequence is LAFSLIMIVGLYTLFLIAEV. At 491–514 the chain is on the periplasmic side; sequence YLMQKYARLGPSAMQSEQPTQQQG.

It belongs to the cytochrome ubiquinol oxidase subunit 1 family. Heterodimer of subunits I and II. Heme serves as cofactor. The N-terminus is blocked.

Its subcellular location is the cell inner membrane. It catalyses the reaction 2 a ubiquinol + O2 + n H(+)(in) = 2 a ubiquinone + 2 H2O + n H(+)(out). The protein operates within energy metabolism; oxidative phosphorylation. Its activity is regulated as follows. Inhibited by cyanide; is more sensitive to cyanide than cytochrome bd-I oxidase. A terminal oxidase that catalyzes quinol-dependent, Na(+)-independent oxygen uptake. Prefers menadiol over other quinols although ubiquinol was not tested. Generates a proton motive force using protons and electrons from opposite sides of the membrane to generate H(2)O, transferring 1 proton/electron. This Escherichia coli (strain K12) protein is Cytochrome bd-II ubiquinol oxidase subunit 1 (appC).